The primary structure comprises 364 residues: Aminomethyltransferase (364 aa).

Belongs to the GcvT family. In terms of assembly, the glycine cleavage system is composed of four proteins: P, T, L and H.

It carries out the reaction N(6)-[(R)-S(8)-aminomethyldihydrolipoyl]-L-lysyl-[protein] + (6S)-5,6,7,8-tetrahydrofolate = N(6)-[(R)-dihydrolipoyl]-L-lysyl-[protein] + (6R)-5,10-methylene-5,6,7,8-tetrahydrofolate + NH4(+). Functionally, the glycine cleavage system catalyzes the degradation of glycine. This is Aminomethyltransferase from Shewanella pealeana (strain ATCC 700345 / ANG-SQ1).